The following is a 371-amino-acid chain: Probable dual-specificity RNA methyltransferase RlmN (371 aa).

Glu113 serves as the catalytic Proton acceptor. A Radical SAM core domain is found at 119–352 (QSWGNSVCVT…TTVRREMGGE (234 aa)). Cysteines 126 and 357 form a disulfide. Positions 133, 137, and 140 each coordinate [4Fe-4S] cluster. Residues 182–183 (GE), Ser214, 237–239 (SLH), and Asn313 contribute to the S-adenosyl-L-methionine site. Residue Cys357 is the S-methylcysteine intermediate of the active site.

This sequence belongs to the radical SAM superfamily. RlmN family. Requires [4Fe-4S] cluster as cofactor.

The protein resides in the cytoplasm. The enzyme catalyses adenosine(2503) in 23S rRNA + 2 reduced [2Fe-2S]-[ferredoxin] + 2 S-adenosyl-L-methionine = 2-methyladenosine(2503) in 23S rRNA + 5'-deoxyadenosine + L-methionine + 2 oxidized [2Fe-2S]-[ferredoxin] + S-adenosyl-L-homocysteine. It catalyses the reaction adenosine(37) in tRNA + 2 reduced [2Fe-2S]-[ferredoxin] + 2 S-adenosyl-L-methionine = 2-methyladenosine(37) in tRNA + 5'-deoxyadenosine + L-methionine + 2 oxidized [2Fe-2S]-[ferredoxin] + S-adenosyl-L-homocysteine. In terms of biological role, specifically methylates position 2 of adenine 2503 in 23S rRNA and position 2 of adenine 37 in tRNAs. In Symbiobacterium thermophilum (strain DSM 24528 / JCM 14929 / IAM 14863 / T), this protein is Probable dual-specificity RNA methyltransferase RlmN.